The primary structure comprises 447 residues: ATP-dependent 6-phosphofructokinase (447 aa).

ATP-binding positions include glycine 88, 154-155 (RG), and 179-182 (GDGT). Residue aspartate 180 participates in Mg(2+) binding. Substrate contacts are provided by residues 208–210 (TVD), 253–255 (MGR), glutamate 315, and 368–371 (YIIR). Residue aspartate 210 is the Proton acceptor of the active site.

It belongs to the phosphofructokinase type A (PFKA) family. PPi-dependent PFK group II subfamily. Atypical ATP-dependent clade 'X' sub-subfamily. Homodimer. Requires Mg(2+) as cofactor.

The protein localises to the cytoplasm. The enzyme catalyses beta-D-fructose 6-phosphate + ATP = beta-D-fructose 1,6-bisphosphate + ADP + H(+). Its pathway is carbohydrate degradation; glycolysis; D-glyceraldehyde 3-phosphate and glycerone phosphate from D-glucose: step 3/4. In terms of biological role, catalyzes the phosphorylation of D-fructose 6-phosphate to fructose 1,6-bisphosphate by ATP, the first committing step of glycolysis. The protein is ATP-dependent 6-phosphofructokinase of Borreliella burgdorferi (strain ATCC 35210 / DSM 4680 / CIP 102532 / B31) (Borrelia burgdorferi).